The sequence spans 172 residues: NAD(P)H-quinone oxidoreductase subunit I, chloroplastic (172 aa).

2 consecutive 4Fe-4S ferredoxin-type domains span residues 55–84 (GRIH…VDWK) and 95–124 (LNYS…MTEE). [4Fe-4S] cluster is bound by residues Cys-64, Cys-67, Cys-70, Cys-74, Cys-104, Cys-107, Cys-110, and Cys-114.

Belongs to the complex I 23 kDa subunit family. NDH is composed of at least 16 different subunits, 5 of which are encoded in the nucleus. [4Fe-4S] cluster is required as a cofactor.

It localises to the plastid. It is found in the chloroplast thylakoid membrane. It carries out the reaction a plastoquinone + NADH + (n+1) H(+)(in) = a plastoquinol + NAD(+) + n H(+)(out). The enzyme catalyses a plastoquinone + NADPH + (n+1) H(+)(in) = a plastoquinol + NADP(+) + n H(+)(out). Its function is as follows. NDH shuttles electrons from NAD(P)H:plastoquinone, via FMN and iron-sulfur (Fe-S) centers, to quinones in the photosynthetic chain and possibly in a chloroplast respiratory chain. The immediate electron acceptor for the enzyme in this species is believed to be plastoquinone. Couples the redox reaction to proton translocation, and thus conserves the redox energy in a proton gradient. This chain is NAD(P)H-quinone oxidoreductase subunit I, chloroplastic, found in Arabidopsis thaliana (Mouse-ear cress).